The following is a 358-amino-acid chain: Magnesium-protoporphyrin IX monomethyl ester [oxidative] cyclase (358 aa).

Belongs to the AcsF family. The cofactor is Fe cation.

It catalyses the reaction Mg-protoporphyrin IX 13-monomethyl ester + 3 NADPH + 3 O2 + 2 H(+) = 3,8-divinyl protochlorophyllide a + 3 NADP(+) + 5 H2O. Its pathway is porphyrin-containing compound metabolism; chlorophyll biosynthesis (light-independent). In terms of biological role, catalyzes the formation of the isocyclic ring in chlorophyll biosynthesis. Mediates the cyclase reaction, which results in the formation of divinylprotochlorophyllide (Pchlide) characteristic of all chlorophylls from magnesium-protoporphyrin IX 13-monomethyl ester (MgPMME). In Trichodesmium erythraeum (strain IMS101), this protein is Magnesium-protoporphyrin IX monomethyl ester [oxidative] cyclase.